A 218-amino-acid polypeptide reads, in one-letter code: Large ribosomal subunit protein uL3 (218 aa).

Belongs to the universal ribosomal protein uL3 family. In terms of assembly, part of the 50S ribosomal subunit. Forms a cluster with proteins L14 and L19.

One of the primary rRNA binding proteins, it binds directly near the 3'-end of the 23S rRNA, where it nucleates assembly of the 50S subunit. The sequence is that of Large ribosomal subunit protein uL3 from Corynebacterium diphtheriae (strain ATCC 700971 / NCTC 13129 / Biotype gravis).